The chain runs to 1866 residues: Protein NLRC5 (1866 aa).

A disordered region spans residues 105–135; it reads GAEGKSQPESQLHHGLKRPHQSCGSSPRRKQ. Residues 222-539 enclose the NACHT domain; that stretch reads RVTVLLGKAG…PKVNKDTLTQ (318 aa). 228 to 235 serves as a coordination point for ATP; it reads GKAGMGKT. 26 LRR repeats span residues 599 to 622, 713 to 737, 741 to 765, 769 to 792, 869 to 892, 897 to 921, 930 to 953, 976 to 1000, 1004 to 1026, 1031 to 1058, 1138 to 1161, 1162 to 1184, 1242 to 1265, 1272 to 1294, 1462 to 1488, 1493 to 1516, 1521 to 1544, 1554 to 1577, 1578 to 1600, 1605 to 1628, 1633 to 1656, 1661 to 1684, 1687 to 1714, 1715 to 1739, 1741 to 1762, and 1795 to 1818; these read LKKLATRKLTGPKVVELCHCVDET, MGRLQMLGLAGSKITARGISHLVKA, CPQLKEVSFRDNQLSDQVVLNIVEV, LPRLRKLDLSSNSICVSTLLCLAR, GPHLEEVDLSGNQLEDEGCRLMAE, LHIARKLDLSNNGLSVAGVHCVLRA, ELHISLQHKTVIFMFAQEPEEQKG, SRRMRLTHCGLQEKHLEQLCKALGG, LGHLHLDFSGNALGDEGAARLAQ, LGALQSLNLSENGLSLDAVLGLVRCFST, LELQLSCEFLSDQSLETLLDCLPQ, LPQLSLLQLSQTGLSPKSPFLLA, CKDLSQVDLSANLLGDSGLRCLLE, ISGLLDLSHNSISQESALYLLET, CARLQQLSLSQVNLCEDDDASSLLLQS, LSELKTFRLTSSCVSTEGLAHLAS, CHHLEELDLSNNQFDEEGTKALMR, RLDLSHLLLNSSTLALLTHRLSQM, TCLQSLRLNRNSIGDVGCCHLSE, ATSLEELDLSHNQIGDAGVQHLAT, LPELRKIDLSGNSISSAGGVQLAE, CRRLEELMLGCNALGDPTALGLAQ, PQHLRVLHLPFSHLGPGGALSLAQALDG, SPHLEEISLAENNLAGGVLRFCMEL, LLRQIDLVSCKIDNQTAKLLTS, and MGRLKRVDLEKNQITALGAWLLAE.

It belongs to the NLRP family. Interacts with CHUK and IKBKB; prevents CHUK and IKBKB phosphorylation and inhibits their kinase activity. Interacts with RIGI and IFIH1; blocks the interaction of MAVS to RIGI. As to expression, expressed in spleen, thymus, lung, brain, tonsil, heart and prostate.

It localises to the cytoplasm. Functionally, probable regulator of the NF-kappa-B and type I interferon signaling pathways. May also regulate the type II interferon signaling pathway. Plays a role in homeostatic control of innate immunity and in antiviral defense mechanisms. This chain is Protein NLRC5 (NLRC5), found in Homo sapiens (Human).